A 295-amino-acid polypeptide reads, in one-letter code: Ribosomal RNA small subunit methyltransferase A (295 aa).

6 residues coordinate S-adenosyl-L-methionine: asparagine 33, valine 35, glycine 60, glutamate 81, aspartate 111, and asparagine 129.

The protein belongs to the class I-like SAM-binding methyltransferase superfamily. rRNA adenine N(6)-methyltransferase family. RsmA subfamily.

It is found in the cytoplasm. The catalysed reaction is adenosine(1518)/adenosine(1519) in 16S rRNA + 4 S-adenosyl-L-methionine = N(6)-dimethyladenosine(1518)/N(6)-dimethyladenosine(1519) in 16S rRNA + 4 S-adenosyl-L-homocysteine + 4 H(+). Specifically dimethylates two adjacent adenosines (A1518 and A1519) in the loop of a conserved hairpin near the 3'-end of 16S rRNA in the 30S particle. May play a critical role in biogenesis of 30S subunits. The sequence is that of Ribosomal RNA small subunit methyltransferase A from Corynebacterium diphtheriae (strain ATCC 700971 / NCTC 13129 / Biotype gravis).